The sequence spans 142 residues: Glia maturation factor beta (142 aa).

Ser-2 carries the post-translational modification N-acetylserine. An ADF-H domain is found at Ser-4 to Gly-139.

The protein belongs to the actin-binding proteins ADF family. GMF subfamily. In terms of processing, phosphorylated; stimulated by phorbol ester.

This protein causes differentiation of brain cells, stimulation of neural regeneration, and inhibition of proliferation of tumor cells. This chain is Glia maturation factor beta (Gmfb), found in Mus musculus (Mouse).